Here is a 197-residue protein sequence, read N- to C-terminus: Chaperone protein dnaJ 20, chloroplastic (197 aa).

Residues 1–60 (MKCYKSSSILSTNHHPFFYKQQPISSLQPTSIPTTISYPTRTRFSSTRIQSRLTHDDPVK) constitute a chloroplast transit peptide. The 68-residue stretch at 66 to 133 (SFYDLLGVTE…RRRVLYDRDL (68 aa)) folds into the J domain. The segment at 169-197 (SGLRRRSNQKDNNTMSWAARMRRQQQESS) is disordered.

It belongs to the DnaJ family. C/III subfamily. Light-grown seedlings.

The protein resides in the plastid. It is found in the chloroplast. In terms of biological role, plays a continuous role in plant development probably in the structural organization of compartments. The protein is Chaperone protein dnaJ 20, chloroplastic (ATJ20) of Arabidopsis thaliana (Mouse-ear cress).